Consider the following 271-residue polypeptide: Sulfur carrier protein FdhD (271 aa).

The Cysteine persulfide intermediate role is filled by cysteine 114.

It belongs to the FdhD family.

It localises to the cytoplasm. Functionally, required for formate dehydrogenase (FDH) activity. Acts as a sulfur carrier protein that transfers sulfur from IscS to the molybdenum cofactor prior to its insertion into FDH. This is Sulfur carrier protein FdhD from Agrobacterium fabrum (strain C58 / ATCC 33970) (Agrobacterium tumefaciens (strain C58)).